The sequence spans 177 residues: UPF0114 protein HP_0189 (177 aa).

The next 3 helical transmembrane spans lie at 15–35 (WLLAPLCIAMSLVLVVLGYVF), 54–74 (LVLSALGLVDLLFMAGLVLMV), and 145–165 (PIFWQVVIHLVFVCSALLAAV).

It belongs to the UPF0114 family.

It localises to the cell membrane. The sequence is that of UPF0114 protein HP_0189 from Helicobacter pylori (strain ATCC 700392 / 26695) (Campylobacter pylori).